A 446-amino-acid polypeptide reads, in one-letter code: Movement protein TGB1 (446 aa).

Positions 40 to 60 (NKLDKRLQNTRKKNKNKEKTR) are disordered. In terms of domain architecture, (+)RNA virus helicase ATP-binding spans 160–303 (KACCKKERNQ…WLHVPIVFSS (144 aa)). 193-200 (GVPGSGKS) serves as a coordination point for ATP. One can recognise a (+)RNA virus helicase C-terminal domain in the interval 304–444 (DSSHRFGPET…CYGEEHRPDE (141 aa)).

It belongs to the virgaviridae/benyvirus TGB1 movement protein family. In terms of assembly, homooligomer. Interacts with movement protein TGB3. TGB1-TGB3-TGB2 complex formation is enhanced by ATP hydrolysis. Interacts with the suppressor of RNA silencing (via N-terminus). The cofactor is Mg(2+).

The protein localises to the host cell junction. The protein resides in the host plasmodesma. It localises to the host nucleus. Its subcellular location is the host cytoplasm. It is found in the host nucleolus. The protein localises to the host cytoskeleton. The enzyme catalyses ATP + H2O = ADP + phosphate + H(+). Participates in the transport of viral genome to neighboring plant cells directly through plasmodesmata, without any budding. Multifunctional movement protein with RNA-binding, ATPase and helicase activities. Engages in homologous interactions leading to the formation of a ribonucleoprotein complex containing plus-sense viral RNAs (vRNPs). ATPase activity is probably required for vRNPs movement complex assembly. Intracellular delivery of TGBp1-containing vRNPs to plasmodesmata is facilitated by TGBp2 and TGBp3. This is Movement protein TGB1 from Arachis hypogaea (Peanut).